The chain runs to 410 residues: Imidazolonepropionase (410 aa).

2 residues coordinate Fe(3+): His-73 and His-75. Zn(2+) contacts are provided by His-73 and His-75. Positions 82, 145, and 178 each coordinate 4-imidazolone-5-propanoate. Residue Tyr-145 coordinates N-formimidoyl-L-glutamate. Residue His-243 coordinates Fe(3+). Residue His-243 coordinates Zn(2+). 4-imidazolone-5-propanoate is bound at residue Gln-246. Asp-318 is a binding site for Fe(3+). A Zn(2+)-binding site is contributed by Asp-318. Residues Asn-320 and Gly-322 each coordinate N-formimidoyl-L-glutamate. Ser-323 contributes to the 4-imidazolone-5-propanoate binding site.

The protein belongs to the metallo-dependent hydrolases superfamily. HutI family. It depends on Zn(2+) as a cofactor. The cofactor is Fe(3+).

The protein localises to the cytoplasm. The enzyme catalyses 4-imidazolone-5-propanoate + H2O = N-formimidoyl-L-glutamate. It functions in the pathway amino-acid degradation; L-histidine degradation into L-glutamate; N-formimidoyl-L-glutamate from L-histidine: step 3/3. In terms of biological role, catalyzes the hydrolytic cleavage of the carbon-nitrogen bond in imidazolone-5-propanoate to yield N-formimidoyl-L-glutamate. It is the third step in the universal histidine degradation pathway. The sequence is that of Imidazolonepropionase from Shewanella baltica (strain OS223).